A 418-amino-acid polypeptide reads, in one-letter code: UDP-N-acetylglucosamine 1-carboxyvinyltransferase (418 aa).

22–23 provides a ligand contact to phosphoenolpyruvate; that stretch reads KN. Arginine 93 provides a ligand contact to UDP-N-acetyl-alpha-D-glucosamine. The Proton donor role is filled by cysteine 117. 2-(S-cysteinyl)pyruvic acid O-phosphothioketal is present on cysteine 117. Residues aspartate 305 and valine 327 each coordinate UDP-N-acetyl-alpha-D-glucosamine.

Belongs to the EPSP synthase family. MurA subfamily.

It is found in the cytoplasm. It carries out the reaction phosphoenolpyruvate + UDP-N-acetyl-alpha-D-glucosamine = UDP-N-acetyl-3-O-(1-carboxyvinyl)-alpha-D-glucosamine + phosphate. It functions in the pathway cell wall biogenesis; peptidoglycan biosynthesis. Cell wall formation. Adds enolpyruvyl to UDP-N-acetylglucosamine. This is UDP-N-acetylglucosamine 1-carboxyvinyltransferase from Halorhodospira halophila (strain DSM 244 / SL1) (Ectothiorhodospira halophila (strain DSM 244 / SL1)).